The primary structure comprises 317 residues: Melanocyte-stimulating hormone receptor (317 aa).

Over 1–37 (MRVQGSQRRLLGSLNSTPTATPHLGLAANQTGARCLE) the chain is Extracellular. Asn29 is a glycosylation site (N-linked (GlcNAc...) asparagine). Residues 38-63 (VSIPDGLFLSLGLVSLVENVLVVTAI) traverse the membrane as a helical segment. The Cytoplasmic portion of the chain corresponds to 64–72 (AKNRNLHSP). Residues 73–93 (MYCFICCLALSDLLVSGSNML) traverse the membrane as a helical segment. Residues 94-118 (ETAVTLLLEAGALAARAAVVQQLDN) lie on the Extracellular side of the membrane. The helical transmembrane segment at 119-140 (VIDVITCSSMLSSLCFLGAIAV) threads the bilayer. The Cytoplasmic portion of the chain corresponds to 141–163 (DRYISIFYALRYHSIVTLPRARR). The helical transmembrane segment at 164–183 (AIAAIWVASVLCSTLFIAYY) threads the bilayer. Topologically, residues 184–191 (DHAAVLLC) are extracellular. Residues 192–211 (LVVFFLAMLVLMAVLYVHML) form a helical membrane-spanning segment. Topologically, residues 212–240 (ARACQHAQGIARLHKRQRLAHQGFGLKGA) are cytoplasmic. The helical transmembrane segment at 241 to 266 (ATLTILLGIFFLCWGPFFLHLTLIVL) threads the bilayer. Topologically, residues 267–279 (CPQHPTCSCIFKN) are extracellular. Residues 280-300 (FNLFLALIICNAIIDPLIYAF) traverse the membrane as a helical segment. The Cytoplasmic portion of the chain corresponds to 301–317 (RSQELRRTLKEVLLCSW). A lipid anchor (S-palmitoyl cysteine) is attached at Cys315.

It belongs to the G-protein coupled receptor 1 family. In terms of assembly, interacts with MGRN1, but does not undergo MGRN1-mediated ubiquitination; this interaction competes with GNAS-binding and thus inhibits agonist-induced cAMP production. Interacts with OPN3; the interaction results in a decrease in MC1R-mediated cAMP signaling and ultimately a decrease in melanin production in melanocytes.

The protein resides in the cell membrane. In terms of biological role, receptor for MSH (alpha, beta and gamma) and ACTH. The activity of this receptor is mediated by G proteins which activate adenylate cyclase. Mediates melanogenesis, the production of eumelanin (black/brown) and phaeomelanin (red/yellow), via regulation of cAMP signaling in melanocytes. The sequence is that of Melanocyte-stimulating hormone receptor (MC1R) from Macaca nigra (Celebes black macaque).